The chain runs to 140 residues: ATP synthase epsilon chain (140 aa).

Belongs to the ATPase epsilon chain family. As to quaternary structure, F-type ATPases have 2 components, CF(1) - the catalytic core - and CF(0) - the membrane proton channel. CF(1) has five subunits: alpha(3), beta(3), gamma(1), delta(1), epsilon(1). CF(0) has three main subunits: a, b and c.

The protein localises to the cell membrane. Produces ATP from ADP in the presence of a proton gradient across the membrane. This chain is ATP synthase epsilon chain (atpC), found in Enterococcus hirae (strain ATCC 9790 / DSM 20160 / JCM 8729 / LMG 6399 / NBRC 3181 / NCIMB 6459 / NCDO 1258 / NCTC 12367 / WDCM 00089 / R).